Here is a 291-residue protein sequence, read N- to C-terminus: Gamma-gliadin B (291 aa).

An N-terminal signal peptide occupies residues 1 to 19 (MKTLLILTILAMAITIATA). Low complexity predominate over residues 38 to 81 (LQPHQPFSQQPQQIFPQPQQTFPHQPQQQFPQPQQPQQQFLQPR). The disordered stretch occupies residues 38–137 (LQPHQPFSQQ…QSFPQQQPSL (100 aa)). Residues 82-99 (QPFPQQPQQPYPQQPQQP) are compositionally biased toward pro residues. 2 stretches are compositionally biased toward low complexity: residues 100–117 (FPQT…KQPQ) and 125–137 (QPQQ…QPSL).

It belongs to the gliadin/glutenin family.

Its function is as follows. Gliadin is the major seed storage protein in wheat. This chain is Gamma-gliadin B, found in Triticum aestivum (Wheat).